Reading from the N-terminus, the 557-residue chain is Eudesmanediol synthase (557 aa).

Asp-310 and Asp-314 together coordinate Mg(2+). Substrate contacts are provided by Asp-310, Asp-314, Arg-450, and Asn-453. The DDXXD motif motif lies at 310-314; the sequence is DDTFD. Mg(2+) is bound by residues Asn-453 and Ser-457.

The protein belongs to the terpene synthase family. As to quaternary structure, monomer. Mg(2+) serves as cofactor. Mn(2+) is required as a cofactor. In terms of tissue distribution, specifically expressed in roots.

The protein resides in the cytoplasm. The enzyme catalyses (2E,6E)-farnesyl diphosphate + 2 H2O = 7-epi-ent-eudesmane-5,11-diol + diphosphate. Its pathway is secondary metabolite biosynthesis; terpenoid biosynthesis. Its function is as follows. Component of the volatile terpenes biosynthesis pathways. Dihydroxylated sesquiterpenoid synthase that generates dually hydroxylated products directly from (E,E)-farnesyl diphosphate, primarily eudesmane-2,11-diol, along with two closely related structural isomers. The polypeptide is Eudesmanediol synthase (Zea mays (Maize)).